The following is a 285-amino-acid chain: Golgi phosphoprotein 3-like (285 aa).

Residues 1 to 42 (MTTLTHRARRTEISKNSEKKMESEEDSNWEKSPDNEDSGDSK) form a disordered region. The span at 10 to 42 (RTEISKNSEKKMESEEDSNWEKSPDNEDSGDSK) shows a compositional bias: basic and acidic residues. W67 and R76 together coordinate a 1,2-diacyl-sn-glycero-3-phospho-(1D-myo-inositol 4-phosphate). S112 is modified (phosphoserine). Residues R157 and R160 each coordinate a 1,2-diacyl-sn-glycero-3-phospho-(1D-myo-inositol 4-phosphate). The interval 176-187 (EKQNFLLFDMTT) is beta-hairpin required for oligomerization.

It belongs to the GOLPH3/VPS74 family. As to quaternary structure, homooligomer. Does not interact MYO18; differs from GOLPH3 by its inability to interact with MYO18. May interact with ARF1.

Its subcellular location is the golgi apparatus. It is found in the golgi stack membrane. The protein localises to the trans-Golgi network membrane. Phosphatidylinositol-4-phosphate-binding protein that may antagonize the action of GOLPH3 which is required for the process of vesicle budding at the Golgi and anterograde transport to the plasma membrane. This Homo sapiens (Human) protein is Golgi phosphoprotein 3-like (GOLPH3L).